The sequence spans 87 residues: Small ribosomal subunit protein bS20 (87 aa).

A compositionally biased stretch (basic residues) spans 1 to 27 (MANIKSAKKRALQSERRRQHNASRRSM). Residues 1-31 (MANIKSAKKRALQSERRRQHNASRRSMTRTS) form a disordered region.

It belongs to the bacterial ribosomal protein bS20 family.

In terms of biological role, binds directly to 16S ribosomal RNA. The protein is Small ribosomal subunit protein bS20 of Pseudoalteromonas atlantica (strain T6c / ATCC BAA-1087).